The chain runs to 875 residues: Probable ATP-dependent RNA helicase DDX10 (875 aa).

The disordered stretch occupies residues 1–43; it reads MGKTANSPGSGARPDPVRSFNRWKKKHSHRQNKKKQLRKQLKK. A Phosphothreonine modification is found at threonine 4. Serine 7 is modified (phosphoserine). Over residues 21 to 41 the composition is skewed to basic residues; that stretch reads NRWKKKHSHRQNKKKQLRKQL. The Q motif signature appears at 69-97; that stretch reads TRFSDFPLSKKTLKGLQEAQYRLVTEIQK. ATP contacts are provided by residues 89 to 91, glutamine 96, and 113 to 120; these read YRL and AKTGSGKT. The region spanning 100–274 is the Helicase ATP-binding domain; the sequence is IGLALQGKDV…RLSLKNPEYV (175 aa). The DEAD box motif lies at 222–225; the sequence is DEAD. A Helicase C-terminal domain is found at 287-448; that stretch reads TLEQNYIVCE…EIKINPEKLI (162 aa). Residue serine 539 is modified to Phosphoserine. At lysine 555 the chain carries N6-acetyllysine. The disordered stretch occupies residues 562–631; the sequence is GGKRLEGTEH…QFLDRDEEEE (70 aa). The span at 564–575 shows a compositional bias: basic and acidic residues; sequence KRLEGTEHRQDN. Phosphothreonine is present on threonine 577. Residues 577–593 are compositionally biased toward acidic residues; that stretch reads TGNEEQEEEEDDEEEME. Over residues 603–613 the composition is skewed to polar residues; that stretch reads QAPSLPNTSEA. Lysine 649 is covalently cross-linked (Glycyl lysine isopeptide (Lys-Gly) (interchain with G-Cter in SUMO2)). Residues 703 to 850 are disordered; that stretch reads MQKSAIKDAE…HNRKKARWDT (148 aa). Basic and acidic residues predominate over residues 727-741; sequence ERLQEEDKFDKEEYR. The segment covering 742–751 has biased composition (basic residues); the sequence is KKIKAKHREK. Positions 752–771 are enriched in basic and acidic residues; the sequence is RLKEREARREANKRQAKAKD. Residues 772–790 show a composition bias toward acidic residues; the sequence is EEEAFLDWSDDDDDDDDGF. At serine 780 the chain carries Phosphoserine. Positions 812-821 are enriched in basic and acidic residues; sequence MENKISDTKK. Serine 831 carries the post-translational modification Phosphoserine.

It belongs to the DEAD box helicase family. DDX10/DBP4 subfamily. Interacts with AIM2; this interaction promotes AIM2 stability. Interacts with SCNA; this interaction causes DDX10 mislocalization to the nucleoplasm and cytoplasmic inclusions. In terms of tissue distribution, high in testis but widely expressed.

Its subcellular location is the cytoplasm. The protein localises to the nucleus. The protein resides in the nucleolus. The enzyme catalyses ATP + H2O = ADP + phosphate + H(+). Functionally, putative ATP-dependent RNA helicase that plays various role in innate immunity or inflammation. Plays a role in the enhancement of AIM2-induced inflammasome activation by interacting with AIM2 and stabilizing its protein level. Negatively regulates viral infection by promoting interferon beta production and interferon stimulated genes/ISGs expression. This is Probable ATP-dependent RNA helicase DDX10 (DDX10) from Homo sapiens (Human).